Here is a 98-residue protein sequence, read N- to C-terminus: Integration host factor subunit alpha (98 aa).

The segment at 51-71 (NFDLRDKNERPGRNPKTGEDI) is disordered. Basic and acidic residues predominate over residues 53–69 (DLRDKNERPGRNPKTGE).

This sequence belongs to the bacterial histone-like protein family. In terms of assembly, heterodimer of an alpha and a beta chain.

In terms of biological role, this protein is one of the two subunits of integration host factor, a specific DNA-binding protein that functions in genetic recombination as well as in transcriptional and translational control. The chain is Integration host factor subunit alpha from Vibrio campbellii (strain ATCC BAA-1116).